The sequence spans 103 residues: Large ribosomal subunit protein uL22c (103 aa).

Belongs to the universal ribosomal protein uL22 family. In terms of assembly, part of the 50S ribosomal subunit.

The protein resides in the plastid. It localises to the chloroplast. Its function is as follows. This protein binds specifically to 23S rRNA. In terms of biological role, the globular domain of the protein is located near the polypeptide exit tunnel on the outside of the subunit, while an extended beta-hairpin is found that lines the wall of the exit tunnel in the center of the 70S ribosome. The protein is Large ribosomal subunit protein uL22c (rpl22) of Cyanidium caldarium (Red alga).